Here is a 183-residue protein sequence, read N- to C-terminus: ATP synthase subunit delta (183 aa).

The protein belongs to the ATPase delta chain family. F-type ATPases have 2 components, F(1) - the catalytic core - and F(0) - the membrane proton channel. F(1) has five subunits: alpha(3), beta(3), gamma(1), delta(1), epsilon(1). F(0) has three main subunits: a(1), b(2) and c(10-14). The alpha and beta chains form an alternating ring which encloses part of the gamma chain. F(1) is attached to F(0) by a central stalk formed by the gamma and epsilon chains, while a peripheral stalk is formed by the delta and b chains.

The protein resides in the cell inner membrane. In terms of biological role, f(1)F(0) ATP synthase produces ATP from ADP in the presence of a proton or sodium gradient. F-type ATPases consist of two structural domains, F(1) containing the extramembraneous catalytic core and F(0) containing the membrane proton channel, linked together by a central stalk and a peripheral stalk. During catalysis, ATP synthesis in the catalytic domain of F(1) is coupled via a rotary mechanism of the central stalk subunits to proton translocation. Functionally, this protein is part of the stalk that links CF(0) to CF(1). It either transmits conformational changes from CF(0) to CF(1) or is implicated in proton conduction. This chain is ATP synthase subunit delta, found in Chloroherpeton thalassium (strain ATCC 35110 / GB-78).